Reading from the N-terminus, the 181-residue chain is Insulin-like growth factor 2 (181 aa).

An N-terminal signal peptide occupies residues 1-24 (MGIPMRKPLLVLLVFLALASCCYA). A b region spans residues 25 to 52 (AYRPSETLCGGELVDTLQFVCGDRGFYF). 3 disulfide bridges follow: cysteine 33-cysteine 71, cysteine 45-cysteine 84, and cysteine 70-cysteine 75. The c stretch occupies residues 53–64 (SRPASRVNRRSR). Positions 65–85 (GIVEECCFRSCDLALLETYCA) are a. Residues 86–91 (TPAKSE) form a d region. Residues 92–181 (RDVSTPPTVL…ASPEASGHRK (90 aa)) constitute a propeptide, e peptide. A disordered region spans residues 151-181 (EAKRHRPLTARPTRDPAAHGGASPEASGHRK). O-linked (GalNAc...) threonine glycosylation is present at threonine 163.

This sequence belongs to the insulin family. As to quaternary structure, interacts with MYORG; this interaction is required for IGF2 secretion. Interacts with integrins ITGAV:ITGB3 and ITGA6:ITGB4; integrin-binding is required for IGF2 signaling. Interacts with IGFBP2. Proteolytically processed by PCSK4, proIGF2 is cleaved at Arg-128 and Arg-92 to generate big-IGF2 and mature IGF2.

The protein resides in the secreted. In terms of biological role, the insulin-like growth factors possess growth-promoting activity. Major fetal growth hormone in mammals. Plays a key role in regulating fetoplacental development. IGF2 is influenced by placental lactogen. Also involved in tissue differentiation. In adults, involved in glucose metabolism in adipose tissue, skeletal muscle and liver. Acts as a ligand for integrin which is required for IGF2 signaling. Positively regulates myogenic transcription factor MYOD1 function by facilitating the recruitment of transcriptional coactivators, thereby controlling muscle terminal differentiation. Inhibits myoblast differentiation and modulates metabolism via increasing the mitochondrial respiration rate. Preptin undergoes glucose-mediated co-secretion with insulin, and acts as a physiological amplifier of glucose-mediated insulin secretion. Exhibits osteogenic properties by increasing osteoblast mitogenic activity through phosphoactivation of MAPK1 and MAPK3. The chain is Insulin-like growth factor 2 from Sus scrofa (Pig).